The sequence spans 253 residues: Triosephosphate isomerase (253 aa).

9–11 (NWK) is a binding site for substrate. His96 acts as the Electrophile in catalysis. The Proton acceptor role is filled by Glu169. Substrate-binding positions include Gly175, Ser215, and 236–237 (GG).

It belongs to the triosephosphate isomerase family. In terms of assembly, homodimer.

The protein resides in the cytoplasm. It catalyses the reaction D-glyceraldehyde 3-phosphate = dihydroxyacetone phosphate. The protein operates within carbohydrate biosynthesis; gluconeogenesis. Its pathway is carbohydrate degradation; glycolysis; D-glyceraldehyde 3-phosphate from glycerone phosphate: step 1/1. In terms of biological role, involved in the gluconeogenesis. Catalyzes stereospecifically the conversion of dihydroxyacetone phosphate (DHAP) to D-glyceraldehyde-3-phosphate (G3P). The polypeptide is Triosephosphate isomerase (Borreliella burgdorferi (strain ZS7) (Borrelia burgdorferi)).